The chain runs to 133 residues: Ribonuclease VapC17 (133 aa).

Asp7 and Asp93 together coordinate Mg(2+). The 89-residue stretch at Ala30–Ala118 folds into the PINc domain.

It belongs to the PINc/VapC protein family. Mg(2+) is required as a cofactor.

Its function is as follows. Toxic component of a type II toxin-antitoxin (TA) system. An RNase. The cognate antitoxin is VapB17. In Mycobacterium tuberculosis (strain CDC 1551 / Oshkosh), this protein is Ribonuclease VapC17.